Reading from the N-terminus, the 306-residue chain is N-acetylmuramic acid 6-phosphate etherase (306 aa).

Residues 62 to 225 (IAQAFQNGGR…TTASMIRIGK (164 aa)) form the SIS domain. Catalysis depends on E90, which acts as the Proton donor. Residue E121 is part of the active site.

The protein belongs to the GCKR-like family. MurNAc-6-P etherase subfamily. In terms of assembly, homodimer.

It carries out the reaction N-acetyl-D-muramate 6-phosphate + H2O = N-acetyl-D-glucosamine 6-phosphate + (R)-lactate. It participates in amino-sugar metabolism; 1,6-anhydro-N-acetylmuramate degradation. It functions in the pathway amino-sugar metabolism; N-acetylmuramate degradation. The protein operates within cell wall biogenesis; peptidoglycan recycling. In terms of biological role, specifically catalyzes the cleavage of the D-lactyl ether substituent of MurNAc 6-phosphate, producing GlcNAc 6-phosphate and D-lactate. Together with AnmK, is also required for the utilization of anhydro-N-acetylmuramic acid (anhMurNAc) either imported from the medium or derived from its own cell wall murein, and thus plays a role in cell wall recycling. The protein is N-acetylmuramic acid 6-phosphate etherase of Vibrio atlanticus (strain LGP32) (Vibrio splendidus (strain Mel32)).